Here is a 328-residue protein sequence, read N- to C-terminus: Probable E3 ubiquitin-protein ligase RHC1A (328 aa).

Ser2 is modified (N-acetylserine). An RING-type; atypical zinc finger spans residues 190–231 (CPVCKDEFELGSEAKQMPCNHIYHSDCIVPWLVQHNSCPVCR). Residues 233–324 (ELPSASGPSS…QQSYMGYSGW (92 aa)) are disordered. Residues 238–250 (SGPSSSQNRTTPT) show a composition bias toward polar residues. 2 stretches are compositionally biased toward low complexity: residues 251-266 (RNYRSSSSSSSSNSRE) and 275-290 (FSSFWPFRSSGSSSSS). The segment covering 291–300 (TQNRGGTRNS) has biased composition (polar residues).

The catalysed reaction is S-ubiquitinyl-[E2 ubiquitin-conjugating enzyme]-L-cysteine + [acceptor protein]-L-lysine = [E2 ubiquitin-conjugating enzyme]-L-cysteine + N(6)-ubiquitinyl-[acceptor protein]-L-lysine.. Its pathway is protein modification; protein ubiquitination. Probable E3 ubiquitin-protein ligase that may possess E3 ubiquitin ligase activity in vitro. The polypeptide is Probable E3 ubiquitin-protein ligase RHC1A (Arabidopsis thaliana (Mouse-ear cress)).